Here is a 152-residue protein sequence, read N- to C-terminus: Protein SprT-like (152 aa).

The region spanning 7–148 (QRLVEEVSLQ…GKCKGKLILI (142 aa)) is the SprT-like domain. Histidine 67 is a Zn(2+) binding site. Glutamate 68 is an active-site residue. Residue histidine 71 participates in Zn(2+) binding.

The protein belongs to the SprT family. It depends on Zn(2+) as a cofactor.

The protein localises to the cytoplasm. The sequence is that of Protein SprT-like from Bacillus cereus (strain ATCC 10987 / NRS 248).